Consider the following 312-residue polypeptide: Ribosomal protein L11 methyltransferase (312 aa).

S-adenosyl-L-methionine-binding residues include T160, G181, D203, and N246.

The protein belongs to the methyltransferase superfamily. PrmA family.

The protein localises to the cytoplasm. The catalysed reaction is L-lysyl-[protein] + 3 S-adenosyl-L-methionine = N(6),N(6),N(6)-trimethyl-L-lysyl-[protein] + 3 S-adenosyl-L-homocysteine + 3 H(+). Methylates ribosomal protein L11. This chain is Ribosomal protein L11 methyltransferase, found in Staphylococcus aureus (strain MRSA252).